We begin with the raw amino-acid sequence, 403 residues long: MEKGKVVLAYSGGLDTSVEIAWLKNKGYDVIACCIDVGEGKDLEAIKEKGLKVGAVESIVIDAKHEFAEEYVLPALQGHAYYENKYPLVSALSRPLIVKKLVEVAKEHGATAIAHGCTGKGNDQVRFEVGIHALVPEMKIEDPIRDLHWSREEEIEYAKENGIPVPISKKSPYSIDENLWGRANECGILEDPWQSAPADAYDRTVALEDTPDTPDVIEITFDKGVPTKLDGEELPLEELIMKLDKLAGKHGIGRIDHVENRLVGIKSREVYECPAATVLLAAHKDMEDLTHERDLAHFKPIIEQKLSELIYNGLWFSPLMDAIQAFLAETQKVVNGVVRVKLFKGNVICEGRKSPNSLYSEELATYTSADQFDQEAAAGFIKLWGLPTQVYAEVMQQNEKNNK.

9 to 17 (AYSGGLDTS) is an ATP binding site. Tyr86 is an L-citrulline binding site. Residue Gly116 coordinates ATP. L-aspartate is bound by residues Thr118, Asn122, and Asp123. Asn122 is an L-citrulline binding site. Positions 126, 174, 259, and 271 each coordinate L-citrulline.

This sequence belongs to the argininosuccinate synthase family. Type 1 subfamily. In terms of assembly, homotetramer.

Its subcellular location is the cytoplasm. It carries out the reaction L-citrulline + L-aspartate + ATP = 2-(N(omega)-L-arginino)succinate + AMP + diphosphate + H(+). The protein operates within amino-acid biosynthesis; L-arginine biosynthesis; L-arginine from L-ornithine and carbamoyl phosphate: step 2/3. The protein is Argininosuccinate synthase of Ligilactobacillus salivarius (strain UCC118) (Lactobacillus salivarius).